We begin with the raw amino-acid sequence, 439 residues long: Tol-Pal system protein TolB (439 aa).

An N-terminal signal peptide occupies residues 1–22 (MKKPLRWLAALTALLLPLSALA).

This sequence belongs to the TolB family. As to quaternary structure, the Tol-Pal system is composed of five core proteins: the inner membrane proteins TolA, TolQ and TolR, the periplasmic protein TolB and the outer membrane protein Pal. They form a network linking the inner and outer membranes and the peptidoglycan layer.

The protein localises to the periplasm. Functionally, part of the Tol-Pal system, which plays a role in outer membrane invagination during cell division and is important for maintaining outer membrane integrity. The polypeptide is Tol-Pal system protein TolB (Xanthomonas axonopodis pv. citri (strain 306)).